The chain runs to 590 residues: Aspartate--tRNA(Asp/Asn) ligase (590 aa).

Glutamate 175 serves as a coordination point for L-aspartate. Residues 199–202 (QQFK) form an aspartate region. Arginine 221 and histidine 452 together coordinate L-aspartate. Position 221-223 (221-223 (RDE)) interacts with ATP. Glutamate 485 is a binding site for ATP. L-aspartate is bound at residue arginine 492. 537–540 (GIDR) contacts ATP.

It belongs to the class-II aminoacyl-tRNA synthetase family. Type 1 subfamily. In terms of assembly, homodimer.

The protein localises to the cytoplasm. It carries out the reaction tRNA(Asx) + L-aspartate + ATP = L-aspartyl-tRNA(Asx) + AMP + diphosphate. Its function is as follows. Aspartyl-tRNA synthetase with relaxed tRNA specificity since it is able to aspartylate not only its cognate tRNA(Asp) but also tRNA(Asn). Reaction proceeds in two steps: L-aspartate is first activated by ATP to form Asp-AMP and then transferred to the acceptor end of tRNA(Asp/Asn). This is Aspartate--tRNA(Asp/Asn) ligase from Dinoroseobacter shibae (strain DSM 16493 / NCIMB 14021 / DFL 12).